We begin with the raw amino-acid sequence, 524 residues long: Leucine-rich repeat-containing protein 1 (524 aa).

LRR repeat units follow at residues 11 to 34, 35 to 58, 60 to 81, 83 to 105, 107 to 126, 127 to 149, 150 to 172, 173 to 196, 198 to 218, 219 to 242, 244 to 264, 265 to 288, 290 to 310, 311 to 334, 336 to 356, 357 to 380, and 382 to 405; these read NRHVEAIDKRHCSLVYVPEEIYRY, ARSLEELLLDANQLRELPEQFFQL, KLRKLGLSDNEIQRLPPEIANF, QLVELDVSRNDIPEIPESIAFCK, LQVADFSGNPLTRLPESFPE, LQNLTCLSVNDISLQSLPENIGN, LYNLASLELRENLLTYLPDSLTQ, LRRLEELDLGNNEIYNLPESIGAL, HLKDLWLDGNQLSELPQEIGN, LKNLLCLDVSENRLERLPEEISGL, SLTYLVISQNLLETIPEGIGK, LKKLSILKLDQNRLTQLPEAIGDC, NLTELVLTENRLLTLPKSIGK, LKKLSNLNADRNKLVSLPKEIGGC, SLTMFCIRDNRLTRLPAEVSQ, AVELHVLDVAGNRLHHLPLSLTTL, and LKALWLSDNQSQPLLTFQTDIDRA. Residues 456–512 adopt a coiled-coil conformation; it reads SAIRFLEDEKDEDENETRTLQRRATPHPGELKNMKKTVENLRNDMNAAKGLDSNKNE. Residues 464–485 form a disordered region; sequence EKDEDENETRTLQRRATPHPGE. A Phosphothreonine modification is found at T480.

In terms of assembly, interacts with DLG1. May form a complex with DLG1 and ERBIN, where interaction between LRRC1 and ERBIN is indirect.

The protein resides in the cytoplasm. The protein localises to the membrane. The polypeptide is Leucine-rich repeat-containing protein 1 (Lrrc1) (Mus musculus (Mouse)).